The chain runs to 168 residues: CS3 fimbrial subunit A (168 aa).

A signal peptide spans 1–22; it reads MLKIKYLLIGLSLSAMSSYSLA.

A longer minor form, starting at amino acid 15, has been detected by amino acid sequencing. This is probably due to alternative processing of the signal peptide.

It is found in the fimbrium. Fimbriae (also called pili), polar filaments radiating from the surface of the bacterium to a length of 0.5-1.5 micrometers and numbering 100-300 per cell, enable bacteria to colonize the epithelium of specific host organs. In Escherichia coli, this protein is CS3 fimbrial subunit A.